The chain runs to 307 residues: UDP-3-O-acyl-N-acetylglucosamine deacetylase (307 aa).

Zn(2+) is bound by residues H78, H241, and D245. The Proton donor role is filled by H268.

The protein belongs to the LpxC family. Requires Zn(2+) as cofactor.

It carries out the reaction a UDP-3-O-[(3R)-3-hydroxyacyl]-N-acetyl-alpha-D-glucosamine + H2O = a UDP-3-O-[(3R)-3-hydroxyacyl]-alpha-D-glucosamine + acetate. It functions in the pathway glycolipid biosynthesis; lipid IV(A) biosynthesis; lipid IV(A) from (3R)-3-hydroxytetradecanoyl-[acyl-carrier-protein] and UDP-N-acetyl-alpha-D-glucosamine: step 2/6. Functionally, catalyzes the hydrolysis of UDP-3-O-myristoyl-N-acetylglucosamine to form UDP-3-O-myristoylglucosamine and acetate, the committed step in lipid A biosynthesis. The sequence is that of UDP-3-O-acyl-N-acetylglucosamine deacetylase from Verminephrobacter eiseniae (strain EF01-2).